The primary structure comprises 350 residues: Methionine import ATP-binding protein MetN 1 (350 aa).

Positions 12 to 251 (IDLKNITVLF…PSREVTQDFV (240 aa)) constitute an ABC transporter domain. Residue 48 to 55 (GYSGAGKS) participates in ATP binding.

The protein belongs to the ABC transporter superfamily. Methionine importer (TC 3.A.1.24) family. As to quaternary structure, the complex is composed of two ATP-binding proteins (MetN), two transmembrane proteins (MetI) and a solute-binding protein (MetQ).

The protein resides in the cell membrane. It catalyses the reaction L-methionine(out) + ATP + H2O = L-methionine(in) + ADP + phosphate + H(+). The catalysed reaction is D-methionine(out) + ATP + H2O = D-methionine(in) + ADP + phosphate + H(+). In terms of biological role, part of the ABC transporter complex MetNIQ involved in methionine import. Responsible for energy coupling to the transport system. The sequence is that of Methionine import ATP-binding protein MetN 1 from Oenococcus oeni (strain ATCC BAA-331 / PSU-1).